The chain runs to 179 residues: Bifunctional protein PyrR (179 aa).

A PRPP-binding motif is present at residues 100-112 (VILVDDVLFTGRT).

The protein belongs to the purine/pyrimidine phosphoribosyltransferase family. PyrR subfamily. Homodimer and homohexamer; in equilibrium.

It catalyses the reaction UMP + diphosphate = 5-phospho-alpha-D-ribose 1-diphosphate + uracil. Regulates transcriptional attenuation of the pyrimidine nucleotide (pyr) operon by binding in a uridine-dependent manner to specific sites on pyr mRNA. This disrupts an antiterminator hairpin in the RNA and favors formation of a downstream transcription terminator, leading to a reduced expression of downstream genes. Its function is as follows. Also displays a weak uracil phosphoribosyltransferase activity which is not physiologically significant. The protein is Bifunctional protein PyrR of Geobacillus thermodenitrificans (strain NG80-2).